The sequence spans 287 residues: MSNVLARKPDWLKLRLSAHGEFAATRQLLEQRNLNTVCRSAMCPNLQECWSRGTATFLLLGNICTRTCRFCAVGTASIPPMPDSLEPENIAEAVEIMNLNHVVLTSVNRDDLADGGARHWQKTMQAVRQRNPKVTLECLIPDFQAQTEALDIVLAEAPEVLNHNIETVPSIYHIVRPEANYSSSLNIIRRAKEHFNLTTKSGLMVGMGETFDEVVQSLHDLVQHGCDMVTIGQYLQPSASHIPVNRYVTPEEFDRYKTVAESLGLRNVRSGPFVRSSYLAETLSPDH.

Positions 38, 43, 49, 64, 68, 71, and 277 each coordinate [4Fe-4S] cluster. Residues 50-266 form the Radical SAM core domain; sequence WSRGTATFLL…KTVAESLGLR (217 aa).

It belongs to the radical SAM superfamily. Lipoyl synthase family. [4Fe-4S] cluster is required as a cofactor.

It localises to the cytoplasm. The enzyme catalyses [[Fe-S] cluster scaffold protein carrying a second [4Fe-4S](2+) cluster] + N(6)-octanoyl-L-lysyl-[protein] + 2 oxidized [2Fe-2S]-[ferredoxin] + 2 S-adenosyl-L-methionine + 4 H(+) = [[Fe-S] cluster scaffold protein] + N(6)-[(R)-dihydrolipoyl]-L-lysyl-[protein] + 4 Fe(3+) + 2 hydrogen sulfide + 2 5'-deoxyadenosine + 2 L-methionine + 2 reduced [2Fe-2S]-[ferredoxin]. It participates in protein modification; protein lipoylation via endogenous pathway; protein N(6)-(lipoyl)lysine from octanoyl-[acyl-carrier-protein]: step 2/2. In terms of biological role, catalyzes the radical-mediated insertion of two sulfur atoms into the C-6 and C-8 positions of the octanoyl moiety bound to the lipoyl domains of lipoate-dependent enzymes, thereby converting the octanoylated domains into lipoylated derivatives. The sequence is that of Lipoyl synthase from Chlorobium phaeobacteroides (strain DSM 266 / SMG 266 / 2430).